We begin with the raw amino-acid sequence, 174 residues long: Photosystem II repair protein PSB27-H1, chloroplastic (174 aa).

Residues 1–35 (MASASATATLLKPNLPPHKPTIIASSVSPPLPPPR) are disordered. Position 94 is a phosphothreonine (Thr94). Tyr132 carries the post-translational modification Phosphotyrosine.

This sequence belongs to the Psb27 family.

The protein resides in the plastid. The protein localises to the chloroplast thylakoid membrane. Probably involved in repair of photodamaged photosystem II (PSII). This Arabidopsis thaliana (Mouse-ear cress) protein is Photosystem II repair protein PSB27-H1, chloroplastic (PSB27-1).